The primary structure comprises 133 residues: FPRL1 inhibitory protein (133 aa).

The N-terminal stretch at 1–28 (MKKNITKTIIASTVIAAGLLTQTNDAKA) is a signal peptide.

Belongs to the CHIPS/FLIPr family.

Its subcellular location is the secreted. May be involved in countering the first line of host defense mechanisms. Impairs the leukocyte response to FPRL1 agonists by binding directly to host FPRL1. Exerts, in vitro, anti-inflammatory activity by inhibiting calcium mobilization and cell migration toward chemoattractants. In Staphylococcus aureus (strain Newman), this protein is FPRL1 inhibitory protein (flr).